We begin with the raw amino-acid sequence, 488 residues long: R3H and coiled-coil domain-containing protein 1 (488 aa).

Residues 16 to 81 form the R3H domain; it reads NDFVHRVQEE…KRRTVICHLD (66 aa). Disordered regions lie at residues 87 to 180 and 195 to 322; these read SDGP…GDAE and KSPD…DADH. Positions 114–125 are enriched in low complexity; that stretch reads GAAAGPRGAPAG. Ser232 carries the post-translational modification Phosphoserine. The stretch at 244-321 forms a coiled coil; sequence SHGMRSLVDQ…EEDEDEADAD (78 aa). Residues 252–265 show a composition bias toward acidic residues; the sequence is DQEEEEIEGEEEEK. Composition is skewed to basic and acidic residues over residues 266-280 and 287-301; these read VDEK…KERV and TDAQ…GERM. Positions 302-319 are enriched in acidic residues; sequence DEGEDKVDAEEEDEDEAD.

In Mus musculus (Mouse), this protein is R3H and coiled-coil domain-containing protein 1.